The chain runs to 162 residues: UPF0305 protein MmarC5_0909 (162 aa).

Belongs to the UPF0305 family.

This Methanococcus maripaludis (strain C5 / ATCC BAA-1333) protein is UPF0305 protein MmarC5_0909.